Here is a 1301-residue protein sequence, read N- to C-terminus: DNA-directed RNA polymerase subunit beta (1301 aa).

Belongs to the RNA polymerase beta chain family. As to quaternary structure, the RNAP catalytic core consists of 2 alpha, 1 beta, 1 beta' and 1 omega subunit. When a sigma factor is associated with the core the holoenzyme is formed, which can initiate transcription.

It carries out the reaction RNA(n) + a ribonucleoside 5'-triphosphate = RNA(n+1) + diphosphate. Its function is as follows. DNA-dependent RNA polymerase catalyzes the transcription of DNA into RNA using the four ribonucleoside triphosphates as substrates. The chain is DNA-directed RNA polymerase subunit beta from Chlorobium luteolum (strain DSM 273 / BCRC 81028 / 2530) (Pelodictyon luteolum).